A 977-amino-acid chain; its full sequence is RNA-binding protein 15 (977 aa).

4 stretches are compositionally biased toward basic and acidic residues: residues 1-10 (MRTAGRDPVP), 35-52 (RGDD…ERSP), 59-72 (RGGE…ERSK), and 98-113 (LHLD…REYD). The segment at 1–167 (MRTAGRDPVP…SSAPGGGDGA (167 aa)) is disordered. Residue S109 is modified to Phosphoserine. A compositionally biased stretch (low complexity) spans 119-130 (SSSRLHSYSSPS). The span at 135–150 (SGGGESRSSSRGGGGE) shows a compositional bias: gly residues. The span at 151–160 (SRSSGAASSA) shows a compositional bias: low complexity. An RRM 1 domain is found at 170 to 252 (KTLKISELGS…RPLKIEAVYV (83 aa)). Phosphoserine occurs at positions 179, 208, and 210. K246 participates in a covalent cross-link: Glycyl lysine isopeptide (Lys-Gly) (interchain with G-Cter in SUMO2). A phosphoserine mark is found at S253, S257, and S259. The tract at residues 256–298 (RSRSPLDKDTYPPSASVVGASVGGHRHPPGGGGGQRSLSPGGA) is disordered. Y266 is modified (phosphotyrosine). Residues S292, S294, and S365 each carry the phosphoserine modification. 2 RRM domains span residues 374 to 451 (RTLF…YGKA) and 455 to 529 (TRLW…FADT). Glycyl lysine isopeptide (Lys-Gly) (interchain with G-Cter in SUMO2) cross-links involve residues K406, K420, and K445. K450 is subject to N6-acetyllysine. 2 stretches are compositionally biased toward basic and acidic residues: residues 555 to 581 (HRAP…RDLY) and 613 to 661 (SLDR…ESDR). Residues 555–778 (HRAPDPLRGA…KQDGGTAPVA (224 aa)) form a disordered region. At T568 the chain carries Phosphothreonine. R578 carries the post-translational modification Asymmetric dimethylarginine; alternate; by PRMT1. R578 bears the Omega-N-methylarginine; alternate; by PRMT1 mark. Phosphoserine is present on residues S622, S656, S670, S674, S700, and S741. Basic and acidic residues-rich tracts occupy residues 673-728 (RSPE…AERD) and 741-750 (SPLKKEDRSD). K744 participates in a covalent cross-link: Glycyl lysine isopeptide (Lys-Gly) (interchain with G-Cter in SUMO2). The span at 752-771 (SAPSTSTASSKLKSPSQKQD) shows a compositional bias: polar residues. S765, S767, and S781 each carry phosphoserine. Positions 777–956 (VASASPKLCL…YLVMIIVRGF (180 aa)) constitute an SPOC domain. The interval 865-884 (GSSDSRSSSSSAASDTATST) is disordered. Low complexity predominate over residues 866-884 (SSDSRSSSSSAASDTATST). A Phosphoserine modification is found at S935.

Belongs to the RRM Spen family. As to quaternary structure, component of the WMM complex, a N6-methyltransferase complex composed of a catalytic subcomplex, named MAC, and of an associated subcomplex, named MACOM. The MAC subcomplex is composed of METTL3 and METTL14. The MACOM subcomplex is composed of WTAP, ZC3H13, CBLL1/HAKAI, VIRMA, and, in some cases of RBM15 (RBM15 or RBM15B). Also a component of a MACOM-like complex, named WTAP complex, composed of WTAP, ZC3H13, CBLL1, VIRMA, RBM15, BCLAF1 and THRAP3. Interacts with RBPJ. Interacts (via SPOC domain) with SETD1B. Interacts with NXF1, the interaction is required to promote mRNA export. Interacts with SF3B1. In terms of assembly, (Microbial infection) Interacts with Epstein-Barr virus BSFL2/BMLF1. Post-translationally, methylated at Arg-578 by PRMT1, leading to promote ubiquitination by CNOT4 and subsequent degradation by the proteasome. Ubiquitinated by CNOT4 following methylation at Arg-578 by PRMT1.

Its subcellular location is the nucleus speckle. The protein localises to the nucleus. It localises to the nucleoplasm. The protein resides in the nucleus envelope. It is found in the nucleus membrane. In terms of biological role, RNA-binding protein that acts as a key regulator of N6-methyladenosine (m6A) methylation of RNAs, thereby regulating different processes, such as hematopoietic cell homeostasis, alternative splicing of mRNAs and X chromosome inactivation mediated by Xist RNA. Associated component of the WMM complex, a complex that mediates N6-methyladenosine (m6A) methylation of RNAs, a modification that plays a role in the efficiency of mRNA splicing and RNA processing. Plays a key role in m6A methylation, possibly by binding target RNAs and recruiting the WMM complex. Involved in random X inactivation mediated by Xist RNA: acts by binding Xist RNA and recruiting the WMM complex, which mediates m6A methylation, leading to target YTHDC1 reader on Xist RNA and promoting transcription repression activity of Xist. Required for the development of multiple tissues, such as the maintenance of the homeostasis of long-term hematopoietic stem cells and for megakaryocyte (MK) and B-cell differentiation. Regulates megakaryocyte differentiation by regulating alternative splicing of genes important for megakaryocyte differentiation; probably regulates alternative splicing via m6A regulation. Required for placental vascular branching morphogenesis and embryonic development of the heart and spleen. Acts as a regulator of thrombopoietin response in hematopoietic stem cells by regulating alternative splicing of MPL. May also function as an mRNA export factor, stimulating export and expression of RTE-containing mRNAs which are present in many retrotransposons that require to be exported prior to splicing. High affinity binding of pre-mRNA to RBM15 may allow targeting of the mRNP to the export helicase DBP5 in a manner that is independent of splicing-mediated NXF1 deposition, resulting in export prior to splicing. May be implicated in HOX gene regulation. The chain is RNA-binding protein 15 from Homo sapiens (Human).